Here is a 397-residue protein sequence, read N- to C-terminus: Serpin B10 (397 aa).

Residues 74 to 77 (KKRK) carry the Nuclear localization signal motif.

This sequence belongs to the serpin family. Ov-serpin subfamily.

Its subcellular location is the nucleus. It is found in the cytoplasm. Functionally, protease inhibitor that may play a role in the regulation of protease activities during hematopoiesis and apoptosis induced by TNF. May regulate protease activities in the cytoplasm and in the nucleus. The sequence is that of Serpin B10 (SERPINB10) from Rhinolophus ferrumequinum (Greater horseshoe bat).